The chain runs to 406 residues: Imidazolonepropionase (406 aa).

Fe(3+) contacts are provided by His-67 and His-69. Zn(2+) contacts are provided by His-67 and His-69. The 4-imidazolone-5-propanoate site is built by Arg-76, Tyr-139, and His-172. Tyr-139 is an N-formimidoyl-L-glutamate binding site. Position 237 (His-237) interacts with Fe(3+). His-237 is a binding site for Zn(2+). Gln-240 is a binding site for 4-imidazolone-5-propanoate. Asp-312 provides a ligand contact to Fe(3+). Asp-312 serves as a coordination point for Zn(2+). Residues Asn-314 and Gly-316 each contribute to the N-formimidoyl-L-glutamate site. Thr-317 serves as a coordination point for 4-imidazolone-5-propanoate.

This sequence belongs to the metallo-dependent hydrolases superfamily. HutI family. Requires Zn(2+) as cofactor. Fe(3+) serves as cofactor.

It localises to the cytoplasm. The enzyme catalyses 4-imidazolone-5-propanoate + H2O = N-formimidoyl-L-glutamate. It functions in the pathway amino-acid degradation; L-histidine degradation into L-glutamate; N-formimidoyl-L-glutamate from L-histidine: step 3/3. Its function is as follows. Catalyzes the hydrolytic cleavage of the carbon-nitrogen bond in imidazolone-5-propanoate to yield N-formimidoyl-L-glutamate. It is the third step in the universal histidine degradation pathway. The chain is Imidazolonepropionase from Paraburkholderia phymatum (strain DSM 17167 / CIP 108236 / LMG 21445 / STM815) (Burkholderia phymatum).